A 386-amino-acid chain; its full sequence is Histidinol-phosphate aminotransferase (386 aa).

Over residues methionine 1–arginine 11 the composition is skewed to polar residues. The interval methionine 1 to valine 22 is disordered. At lysine 248 the chain carries N6-(pyridoxal phosphate)lysine.

This sequence belongs to the class-II pyridoxal-phosphate-dependent aminotransferase family. Histidinol-phosphate aminotransferase subfamily. In terms of assembly, homodimer. It depends on pyridoxal 5'-phosphate as a cofactor.

It carries out the reaction L-histidinol phosphate + 2-oxoglutarate = 3-(imidazol-4-yl)-2-oxopropyl phosphate + L-glutamate. It functions in the pathway amino-acid biosynthesis; L-histidine biosynthesis; L-histidine from 5-phospho-alpha-D-ribose 1-diphosphate: step 7/9. This chain is Histidinol-phosphate aminotransferase, found in Moorella thermoacetica (strain ATCC 39073 / JCM 9320).